Here is a 507-residue protein sequence, read N- to C-terminus: Cytochrome P450 monooxygenase helB2 (507 aa).

A signal peptide spans Met1 to Ala22. Cys436 contacts heme.

It belongs to the cytochrome P450 family. Requires heme as cofactor.

It participates in mycotoxin biosynthesis. Cytochrome P450 monooxygenase; part of the gene cluster that mediates the biosynthesis of helvolic acid, an antibacterial nortriterpenoid. Protostadienol synthase helA cyclizes (3S)-oxidosqualene to (17Z)-protosta-17(20),24-dien-3-beta-ol (protostadienol). The synthesis of protostadienol is followed by several steps of monooxygenation, dehydrogenation, and acyl transfer to yield the final helvolic acid. Following the cyclization to the tetracyclic protostadienol by helA, cytochrome P450 monooxygenases helB1-mediated and helB2-mediated oxidation at C-4 and C-16, acyltransferase helD2-dependent acetylation of 16-OH, oxidation of C-21 by cytochrome P450 monooxygenase helB4, and short chain dehydrogenase helC-dependent oxidative decarboxylation yield the fusidane skeleton. This intermediate is further modified in three additional steps mediated by the cytochrome P450 monooxygenase helB3, the acyltransferase helD1, and the 3-ketosteroid 1-dehydrogenase helE to give helvolic acid. Compared with the late stages in the biosynthesis of helvolic acid, enzymes involved in the early stage modifications act in a relatively strict order. The hydroxylation of C-16 by helB1 and subsequent acetylation by helD2 should occur before the helB3-mediated oxidation of C-21. C-4 demethylation in fusidane-type antibiotics proceeds in an unusual manner though it is also achieved by oxidative decarboxylation. The methyl group at C-4 beta position is oxidized by helB1 and subsequently removed by the short chain dehydrogenase helC. This is Cytochrome P450 monooxygenase helB2 from Aspergillus fumigatus (strain ATCC MYA-4609 / CBS 101355 / FGSC A1100 / Af293) (Neosartorya fumigata).